Reading from the N-terminus, the 306-residue chain is Ribonuclease Z (306 aa).

His-63, His-65, Asp-67, His-68, His-141, Asp-211, and His-269 together coordinate Zn(2+). Asp-67 serves as the catalytic Proton acceptor.

The protein belongs to the RNase Z family. In terms of assembly, homodimer. It depends on Zn(2+) as a cofactor.

The enzyme catalyses Endonucleolytic cleavage of RNA, removing extra 3' nucleotides from tRNA precursor, generating 3' termini of tRNAs. A 3'-hydroxy group is left at the tRNA terminus and a 5'-phosphoryl group is left at the trailer molecule.. In terms of biological role, zinc phosphodiesterase, which displays some tRNA 3'-processing endonuclease activity. Probably involved in tRNA maturation, by removing a 3'-trailer from precursor tRNA. The protein is Ribonuclease Z of Staphylococcus aureus (strain Mu3 / ATCC 700698).